Reading from the N-terminus, the 135-residue chain is UPF0201 protein TON_1346 (135 aa).

The protein belongs to the UPF0201 family.

The sequence is that of UPF0201 protein TON_1346 from Thermococcus onnurineus (strain NA1).